The following is a 528-amino-acid chain: MADPQATNGTGAACAERDASDVGDARDEGAGRVVAVRGAVIDVAFDGGALPALNEALTIPVDGAAPILAEVHAHLSDAAVRALALGPTGGLRRGAAVRATGGPIRVPVGDAVLGRLLSVTGAPGDDGAALAADVERRPIHRGAPLLAEQKSANALFATGIKVIDLLAPLAQGGKAAMFGGAGVGKTVLVMELIHAMVERYRGISVFAGIGERSREGHEMLLDMRGSGVLGRTVLVYGQMNEPPGARWRVPLTALAIAEYFRDERAQNVLLLMDNVFRFVQAGAEVSGLLGRLPSRVGYQPTLASEVAALQERIASVEGAAVTAIEAVYVPADDFTDPAVTAIAAHVDSMVVLSRAMAAEGMYPAIDPVASSSILLDPLVVGEAHVEVAIEVRRVIEHYRELQDVIALLGIDELGADDRRLVGRARRLQRFLTQPFAVTEAFTGQAGASVEIADTIAGCRAILRGDCDDWRESSLYMVGTLDDARRKEAAAREADARREAAAAASGAGPGTTSDPASGSAEPQGARHGR.

Positions 1-10 are enriched in polar residues; that stretch reads MADPQATNGT. Positions 1–27 are disordered; the sequence is MADPQATNGTGAACAERDASDVGDARD. A compositionally biased stretch (basic and acidic residues) spans 15 to 27; it reads AERDASDVGDARD. 179–186 serves as a coordination point for ATP; that stretch reads GGAGVGKT. Over residues 488-499 the composition is skewed to basic and acidic residues; the sequence is AAAREADARREA. The tract at residues 488-528 is disordered; the sequence is AAAREADARREAAAAASGAGPGTTSDPASGSAEPQGARHGR.

This sequence belongs to the ATPase alpha/beta chains family. As to quaternary structure, F-type ATPases have 2 components, CF(1) - the catalytic core - and CF(0) - the membrane proton channel. CF(1) has five subunits: alpha(3), beta(3), gamma(1), delta(1), epsilon(1). CF(0) has three main subunits: a(1), b(2) and c(9-12). The alpha and beta chains form an alternating ring which encloses part of the gamma chain. CF(1) is attached to CF(0) by a central stalk formed by the gamma and epsilon chains, while a peripheral stalk is formed by the delta and b chains.

The protein localises to the cell inner membrane. The enzyme catalyses ATP + H2O + 4 H(+)(in) = ADP + phosphate + 5 H(+)(out). Functionally, produces ATP from ADP in the presence of a proton gradient across the membrane. The catalytic sites are hosted primarily by the beta subunits. This Burkholderia pseudomallei (strain 1106a) protein is ATP synthase subunit beta 2.